The following is a 180-amino-acid chain: UPF0102 protein Tery_0733 (180 aa).

Belongs to the UPF0102 family.

This chain is UPF0102 protein Tery_0733, found in Trichodesmium erythraeum (strain IMS101).